We begin with the raw amino-acid sequence, 90 residues long: Acylphosphatase (90 aa).

The Acylphosphatase-like domain maps to 3 to 90 (RYSAIVQGRV…DGEKKFSIKY (88 aa)). Catalysis depends on residues R18 and N36.

The protein belongs to the acylphosphatase family.

It carries out the reaction an acyl phosphate + H2O = a carboxylate + phosphate + H(+). This is Acylphosphatase (acyP) from Clostridium beijerinckii (strain ATCC 51743 / NCIMB 8052) (Clostridium acetobutylicum).